Consider the following 740-residue polypeptide: Catalase-peroxidase (740 aa).

Over residues 1-14 (MTENHDAIVTDAKS) the composition is skewed to basic and acidic residues. Residues 1–21 (MTENHDAIVTDAKSEGSGGCP) are disordered. Positions 108–231 (WHSAGTYRIS…LGAVQMGLIY (124 aa)) form a cross-link, tryptophyl-tyrosyl-methioninium (Trp-Tyr) (with M-257). The Proton acceptor role is filled by H109. The tryptophyl-tyrosyl-methioninium (Tyr-Met) (with W-108) cross-link spans 231 to 257 (YVNPEGPNGNPDPIAAARDIRETFRRM). H272 is a binding site for heme b.

It belongs to the peroxidase family. Peroxidase/catalase subfamily. In terms of assembly, homodimer. Heme b serves as cofactor. Post-translationally, formation of the three residue Trp-Tyr-Met cross-link is important for the catalase, but not the peroxidase activity of the enzyme.

It carries out the reaction H2O2 + AH2 = A + 2 H2O. It catalyses the reaction 2 H2O2 = O2 + 2 H2O. Functionally, bifunctional enzyme with both catalase and broad-spectrum peroxidase activity. The polypeptide is Catalase-peroxidase (Streptomyces reticuli).